We begin with the raw amino-acid sequence, 217 residues long: Ras-related protein RABA2a (217 aa).

G19 to S26 is a GTP binding site. An Effector region motif is present at residues S41 to F49. GTP-binding positions include D67–Q71, N125–D128, and S155–A156. C213 carries S-palmitoyl cysteine lipidation. C214 is subject to Cysteine methyl ester. C214 carries S-geranylgeranyl cysteine lipidation. Positions S215–S217 are cleaved as a propeptide — removed in mature form.

Belongs to the small GTPase superfamily. Rab family. Expressed in root tips.

It localises to the endosome membrane. Its subcellular location is the golgi apparatus. The protein resides in the trans-Golgi network membrane. Its function is as follows. Intracellular vesicle trafficking and protein transport. The polypeptide is Ras-related protein RABA2a (RABA2A) (Arabidopsis thaliana (Mouse-ear cress)).